The primary structure comprises 334 residues: Putative lysine N-acyltransferase C17G9.06c (334 aa).

Substrate is bound at residue His-248. The Proton acceptor role is filled by Glu-286.

Belongs to the lysine N-acyltransferase mbtK family.

Its subcellular location is the cytoplasm. The protein resides in the nucleus. The polypeptide is Putative lysine N-acyltransferase C17G9.06c (Schizosaccharomyces pombe (strain 972 / ATCC 24843) (Fission yeast)).